Reading from the N-terminus, the 272-residue chain is Energy-coupling factor transporter ATP-binding protein EcfA1 (272 aa).

Residues 5–239 enclose the ABC transporter domain; that stretch reads IKIDNLKYSY…RKALHENGLE (235 aa). 37-44 is an ATP binding site; it reads GHNGSGKS. The active-site Proton acceptor is E163.

It belongs to the ABC transporter superfamily. Energy-coupling factor EcfA family. Forms a stable energy-coupling factor (ECF) transporter complex probably composed of 2 membrane-embedded substrate-binding proteins (S component), 2 ATP-binding proteins (A component) and 2 transmembrane proteins (T component). This complex interacts with a number of substrate-specific components, including FolT, PanT and RibU for 5-formyltetrahydrofolate, pantothenate and riboflavin respectively.

The protein localises to the cell membrane. In terms of biological role, ATP-binding (A) component of a common energy-coupling factor (ECF) ABC-transporter complex. Unlike classic ABC transporters this ECF transporter provides the energy necessary to transport a number of different substrates including 5-formyltetrahydrofolate, pantothenate and riboflavin. Expression of the complex plus FolT in E.coli allows 5-formyltetrahydrofolate uptake; 5-formyltetrahydrofolate is not taken up in the absence of FolT or the EcfA1A2T complex. The protein is Energy-coupling factor transporter ATP-binding protein EcfA1 of Leuconostoc mesenteroides subsp. mesenteroides (strain ATCC 8293 / DSM 20343 / BCRC 11652 / CCM 1803 / JCM 6124 / NCDO 523 / NBRC 100496 / NCIMB 8023 / NCTC 12954 / NRRL B-1118 / 37Y).